Here is a 463-residue protein sequence, read N- to C-terminus: Sugar transporter ERD6-like 7 (463 aa).

12 helical membrane-spanning segments follow: residues 26–46 (WMVY…GSCA), 69–89 (LFGS…GPIA), 103–123 (AFCV…ALDL), 126–146 (LATG…IAEI), 157–177 (TLNQ…GTLV), 181–201 (VLAL…FFIP), 264–284 (VLIA…GICF), 299–319 (LGMI…APIV), 327–347 (LLLV…VSFY), 357–377 (AVPV…SAGM), 396–416 (VAGG…SYTF), and 426–446 (GTFL…IAIV).

It belongs to the major facilitator superfamily. Sugar transporter (TC 2.A.1.1) family.

The protein resides in the membrane. In terms of biological role, sugar transporter. The chain is Sugar transporter ERD6-like 7 from Arabidopsis thaliana (Mouse-ear cress).